The sequence spans 365 residues: Peptide chain release factor 2 (365 aa).

Gln252 carries the post-translational modification N5-methylglutamine.

This sequence belongs to the prokaryotic/mitochondrial release factor family. In terms of processing, methylated by PrmC. Methylation increases the termination efficiency of RF2.

The protein resides in the cytoplasm. Peptide chain release factor 2 directs the termination of translation in response to the peptide chain termination codons UGA and UAA. The polypeptide is Peptide chain release factor 2 (Aliivibrio fischeri (strain ATCC 700601 / ES114) (Vibrio fischeri)).